Here is a 228-residue protein sequence, read N- to C-terminus: ATP synthase F(0) complex subunit a (228 aa).

Helical transmembrane passes span 13 to 33 (NILAIPLMTISLLMLTIIFPM), 69 to 89 (WALILTSLMTLLLTSNLLGLL), 98 to 118 (QLSMNLGFALPMWLATLLIGL), 139 to 159 (IPTLILIESISLMIRPLALGV), and 194 to 214 (ILLFLLTILEMAVAMIQALVF).

It belongs to the ATPase A chain family. As to quaternary structure, component of the ATP synthase complex composed at least of ATP5F1A/subunit alpha, ATP5F1B/subunit beta, ATP5MC1/subunit c (homooctomer), MT-ATP6/subunit a, MT-ATP8/subunit 8, ATP5ME/subunit e, ATP5MF/subunit f, ATP5MG/subunit g, ATP5MK/subunit k, ATP5MJ/subunit j, ATP5F1C/subunit gamma, ATP5F1D/subunit delta, ATP5F1E/subunit epsilon, ATP5PF/subunit F6, ATP5PB/subunit b, ATP5PD/subunit d, ATP5PO/subunit OSCP. ATP synthase complex consists of a soluble F(1) head domain (subunits alpha(3) and beta(3)) - the catalytic core - and a membrane F(0) domain - the membrane proton channel (subunits c, a, 8, e, f, g, k and j). These two domains are linked by a central stalk (subunits gamma, delta, and epsilon) rotating inside the F1 region and a stationary peripheral stalk (subunits F6, b, d, and OSCP). Interacts with DNAJC30; interaction is direct.

The protein localises to the mitochondrion inner membrane. It carries out the reaction H(+)(in) = H(+)(out). Subunit a, of the mitochondrial membrane ATP synthase complex (F(1)F(0) ATP synthase or Complex V) that produces ATP from ADP in the presence of a proton gradient across the membrane which is generated by electron transport complexes of the respiratory chain. ATP synthase complex consist of a soluble F(1) head domain - the catalytic core - and a membrane F(1) domain - the membrane proton channel. These two domains are linked by a central stalk rotating inside the F(1) region and a stationary peripheral stalk. During catalysis, ATP synthesis in the catalytic domain of F(1) is coupled via a rotary mechanism of the central stalk subunits to proton translocation. With the subunit c (ATP5MC1), forms the proton-conducting channel in the F(0) domain, that contains two crucial half-channels (inlet and outlet) that facilitate proton movement from the mitochondrial intermembrane space (IMS) into the matrix. Protons are taken up via the inlet half-channel and released through the outlet half-channel, following a Grotthuss mechanism. The chain is ATP synthase F(0) complex subunit a from Pelomedusa subrufa (African side-necked turtle).